Consider the following 677-residue polypeptide: Methionine--tRNA ligase (677 aa).

The short motif at 14–24 (PYANGSIHLGH) is the 'HIGH' region element. Cysteine 145, cysteine 148, cysteine 158, and cysteine 161 together coordinate Zn(2+). Positions 331 to 335 (KMSKS) match the 'KMSKS' region motif. Lysine 334 contacts ATP. Positions 575 to 677 (AFAAVDLRIA…SGAKPGQRVK (103 aa)) constitute a tRNA-binding domain.

This sequence belongs to the class-I aminoacyl-tRNA synthetase family. MetG type 1 subfamily. As to quaternary structure, homodimer. Zn(2+) serves as cofactor.

The protein localises to the cytoplasm. It catalyses the reaction tRNA(Met) + L-methionine + ATP = L-methionyl-tRNA(Met) + AMP + diphosphate. Functionally, is required not only for elongation of protein synthesis but also for the initiation of all mRNA translation through initiator tRNA(fMet) aminoacylation. The polypeptide is Methionine--tRNA ligase (Pseudomonas aeruginosa (strain LESB58)).